Consider the following 190-residue polypeptide: Remorin (190 aa).

The segment covering methionine 1–valine 12 has biased composition (basic and acidic residues). Disordered stretches follow at residues methionine 1–lysine 45 and valine 50–arginine 69. At serine 14 the chain carries Phosphoserine. Threonine 58 carries the phosphothreonine modification. Positions glutamate 92–isoleucine 147 form a coiled coil.

The protein belongs to the remorin family. May polymerize to form filamentous structures. In terms of tissue distribution, expressed in roots, leaves, stems, flowers and siliques, with a maximal expression in apical regions.

Its function is as follows. Exhibits a non sequence-specific DNA-binding activity. This Arabidopsis thaliana (Mouse-ear cress) protein is Remorin (DBP).